The sequence spans 447 residues: Cysteine--tRNA ligase (447 aa).

C28 contributes to the Zn(2+) binding site. The 'HIGH' region motif lies at 30-40; the sequence is PTVYNYIHIGN. Residues C211, H236, and E240 each coordinate Zn(2+). The 'KMSKS' region motif lies at 268–272; it reads KMSKS. ATP is bound at residue K271.

It belongs to the class-I aminoacyl-tRNA synthetase family. In terms of assembly, monomer. Requires Zn(2+) as cofactor.

It is found in the cytoplasm. It catalyses the reaction tRNA(Cys) + L-cysteine + ATP = L-cysteinyl-tRNA(Cys) + AMP + diphosphate. The polypeptide is Cysteine--tRNA ligase (Streptococcus pyogenes serotype M6 (strain ATCC BAA-946 / MGAS10394)).